A 309-amino-acid polypeptide reads, in one-letter code: Dicarboxylate carrier UCP2 (309 aa).

The Mitochondrial intermembrane portion of the chain corresponds to 1 to 16; sequence MVGFKATDVPPTATVK. 3 Solcar repeats span residues 11 to 106, 114 to 203, and 212 to 297; these read PTAT…VKQF, ASIG…IKDA, and DDLP…LKRA. The interval 16–63 is important for interaction with long-chain fatty acids; it reads KFLGAGTAACIADLITFPLDTAKVRLQIQGESQGPVHATASAQYRGVM. Residues 17–40 form a helical membrane-spanning segment; the sequence is FLGAGTAACIADLITFPLDTAKVR. The Mitochondrial matrix segment spans residues 41-77; sequence LQIQGESQGPVHATASAQYRGVMGTILTMVRTEGPRS. The chain crosses the membrane as a helical span at residues 78-103; sequence LYNGLVAGLQRQMSFASVRIGLYDSV. Topologically, residues 104-119 are mitochondrial intermembrane; the sequence is KQFYTKGSEHASIGSR. The helical transmembrane segment at 120 to 145 threads the bilayer; that stretch reads LLAGSTTGALAVAVAQPTDVVKVRFQ. Topologically, residues 146–173 are mitochondrial matrix; it reads AQARAGGGRRYQSTVNAYKTIAREEGFR. Residues 174-199 form a helical membrane-spanning segment; it reads GLWKGTSPNVARNAIVNCAELVTYDL. Over 200–217 the chain is Mitochondrial intermembrane; the sequence is IKDALLKANLMTDDLPCH. A helical transmembrane segment spans residues 218–242; it reads FTSAFGAGFCTTVIASPVDVVKTRY. The Mitochondrial matrix segment spans residues 243–268; that stretch reads MNSALGQYSSAGHCALTMLQKEGPRA. The chain crosses the membrane as a helical span at residues 269–294; that stretch reads FYKGFMPSFLRLGSWNVVMFVTYEQL. The important for interaction with long-chain fatty acids stretch occupies residues 278–285; sequence LRLGSWNV. Topologically, residues 295 to 309 are mitochondrial intermembrane; it reads KRALMAACTSREAPF.

This sequence belongs to the mitochondrial carrier (TC 2.A.29) family. Homotetramer. Adopts an asymmetrical dimer of dimers functional form. Interacts with MICU1 (when methylated); leading to decrease the calcium sensitivity of MICU1.

It localises to the mitochondrion inner membrane. It carries out the reaction L-aspartate(out) + phosphate(in) + H(+)(in) = L-aspartate(in) + phosphate(out) + H(+)(out). It catalyses the reaction oxaloacetate(out) + phosphate(in) + H(+)(in) = oxaloacetate(in) + phosphate(out) + H(+)(out). The catalysed reaction is (S)-malate(out) + phosphate(in) + H(+)(in) = (S)-malate(in) + phosphate(out) + H(+)(out). The enzyme catalyses malonate(out) + phosphate(in) + H(+)(in) = malonate(in) + phosphate(out) + H(+)(out). It carries out the reaction sulfate(out) + phosphate(in) + H(+)(in) = sulfate(in) + phosphate(out) + H(+)(out). It catalyses the reaction (S)-malate(out) = (S)-malate(in). The catalysed reaction is L-aspartate(out) = L-aspartate(in). The enzyme catalyses phosphate(in) = phosphate(out). It carries out the reaction chloride(in) = chloride(out). It catalyses the reaction H(+)(in) = H(+)(out). The catalysed reaction is a long-chain fatty acid(out) = a long-chain fatty acid(in). In terms of biological role, antiporter that exports dicarboxylate intermediates of the Krebs cycle in exchange for phosphate plus a proton across the inner membrane of mitochondria, a process driven by mitochondrial motive force with an overall impact on glycolysis, glutaminolysis and glutathione-dependent redox balance. Continuous export of oxaloacetate and related four-carbon dicarboxylates from mitochondrial matrix into the cytosol negatively regulates the oxidation of acetyl-CoA substrates via the Krebs cycle lowering the ATP/ADP ratio and reactive oxygen species (ROS) production. May mediate inducible proton entry into the mitochondrial matrix affecting ATP turnover as a protection mechanism against oxidative stress. The proton currents are most likely associated with fatty acid flipping across the inner membrane of mitochondria in a metabolic process regulated by free fatty acids and purine nucleotides. Regulates the use of glucose as a source of energy. Required for glucose-induced DRP1-dependent mitochondrial fission and neuron activation in the ventromedial nucleus of the hypothalamus (VMH). This mitochondrial adaptation mechanism modulates the VMH pool of glucose-excited neurons with an impact on systemic glucose homeostasis. Regulates ROS levels and metabolic reprogramming of macrophages during the resolution phase of inflammation. Attenuates ROS production in response to IL33 to preserve the integrity of the Krebs cycle required for persistent production of itaconate and subsequent GATA3-dependent differentiation of inflammation-resolving alternatively activated macrophages. Can unidirectionally transport anions including L-malate, L-aspartate, phosphate and chloride ions. Does not mediate adaptive thermogenesis. This is Dicarboxylate carrier UCP2 (UCP2) from Pongo abelii (Sumatran orangutan).